Here is a 351-residue protein sequence, read N- to C-terminus: Probable dual-specificity RNA methyltransferase RlmN (351 aa).

Glutamate 92 serves as the catalytic Proton acceptor. The region spanning 98–332 (TDQRLTVCIS…VSLRASRGLD (235 aa)) is the Radical SAM core domain. A disulfide bond links cysteine 105 and cysteine 337. Cysteine 112, cysteine 116, and cysteine 119 together coordinate [4Fe-4S] cluster. Residues 159–160 (GE), serine 189, 218–220 (SLH), and asparagine 294 each bind S-adenosyl-L-methionine. Cysteine 337 (S-methylcysteine intermediate) is an active-site residue.

The protein belongs to the radical SAM superfamily. RlmN family. It depends on [4Fe-4S] cluster as a cofactor.

It is found in the cytoplasm. It catalyses the reaction adenosine(2503) in 23S rRNA + 2 reduced [2Fe-2S]-[ferredoxin] + 2 S-adenosyl-L-methionine = 2-methyladenosine(2503) in 23S rRNA + 5'-deoxyadenosine + L-methionine + 2 oxidized [2Fe-2S]-[ferredoxin] + S-adenosyl-L-homocysteine. It carries out the reaction adenosine(37) in tRNA + 2 reduced [2Fe-2S]-[ferredoxin] + 2 S-adenosyl-L-methionine = 2-methyladenosine(37) in tRNA + 5'-deoxyadenosine + L-methionine + 2 oxidized [2Fe-2S]-[ferredoxin] + S-adenosyl-L-homocysteine. Specifically methylates position 2 of adenine 2503 in 23S rRNA and position 2 of adenine 37 in tRNAs. This Synechococcus sp. (strain CC9902) protein is Probable dual-specificity RNA methyltransferase RlmN.